The chain runs to 393 residues: Protein shisa-9B (393 aa).

The first 20 residues, Met-1–Ala-20, serve as a signal peptide directing secretion. Over Glu-21 to Lys-131 the chain is Extracellular. Residues Leu-28–His-52 form a disordered region. The N-linked (GlcNAc...) asparagine glycan is linked to Asn-38. The helical transmembrane segment at Thr-132–Phe-152 threads the bilayer. The Cytoplasmic segment spans residues Thr-153–Val-393. The tract at residues Gln-307–Ser-340 is disordered. Residues Asn-310–Ser-321 are compositionally biased toward basic residues.

Belongs to the shisa family. SHISA9 subfamily. As to quaternary structure, component of some AMPA receptors (ionotropic glutamate receptors) complex.

The protein localises to the cell projection. It is found in the dendritic spine membrane. The protein resides in the synapse. Its function is as follows. Regulator of short-term neuronal synaptic plasticity in the dentate gyrus. Associates with AMPA receptors (ionotropic glutamate receptors) in synaptic spines and promotes AMPA receptor desensitization at excitatory synapses. This Danio rerio (Zebrafish) protein is Protein shisa-9B (shisa9b).